Consider the following 73-residue polypeptide: Dipeptidyl peptidase 3 (73 aa).

This sequence belongs to the peptidase M49 family. Zn(2+) serves as cofactor.

It is found in the membrane. The catalysed reaction is Release of an N-terminal dipeptide from a peptide comprising four or more residues, with broad specificity. Also acts on dipeptidyl 2-naphthylamides.. Degrades neuropeptide proctolin (RYLPT) by cleavage between Tyr and Leu residues. This Blaberus craniifer (Death's head cockroach) protein is Dipeptidyl peptidase 3.